Here is a 358-residue protein sequence, read N- to C-terminus: NADH-quinone oxidoreductase subunit H (358 aa).

8 consecutive transmembrane segments (helical) span residues Ile20–Ile40, Ala95–Ile115, Ile128–Gly148, Ile168–Met188, Val206–Val226, Gly253–Leu273, Thr295–Ile315, and Val334–Leu354.

The protein belongs to the complex I subunit 1 family. In terms of assembly, NDH-1 is composed of 14 different subunits. Subunits NuoA, H, J, K, L, M, N constitute the membrane sector of the complex.

It localises to the cell inner membrane. The catalysed reaction is a quinone + NADH + 5 H(+)(in) = a quinol + NAD(+) + 4 H(+)(out). NDH-1 shuttles electrons from NADH, via FMN and iron-sulfur (Fe-S) centers, to quinones in the respiratory chain. The immediate electron acceptor for the enzyme in this species is believed to be ubiquinone. Couples the redox reaction to proton translocation (for every two electrons transferred, four hydrogen ions are translocated across the cytoplasmic membrane), and thus conserves the redox energy in a proton gradient. This subunit may bind ubiquinone. The protein is NADH-quinone oxidoreductase subunit H of Neisseria gonorrhoeae (strain ATCC 700825 / FA 1090).